A 542-amino-acid polypeptide reads, in one-letter code: MLIALIAVSVLAVAAIIGSLADRRAIGRRAERAESERDVKALELSRSQERLSRASQDLADSRKDVAKARAELESSRTRASDEARRADNADQARRSAEALLEINRRSVEELTERDHRLQEARRHLEEGLDKIEQDRLELAERSSQLDERDAELDRRHGQIVTELERVAGMSLDEARDELVEHLGREARVFAENSARAIVTEATASAEAKARHIVAEVIQRCSSEMVADTVVSVVPLPSNEMKGRVIGREGRNIRTFEQVTGVTVIIDDTPEIVLLSCFDPMRREVARQALTDLVEDGRIHPISIERAHQRAVDRIEDMCLDAAADALSRAGIDDIDDRLLPILGSLRFRTSYGQQVLDHCVECARLAANLAAEIGADIEICRRAAFLHDLGKSLTPGVEGSSHAAIGAELARRYGESEEVIHAIAAHHDEIDPVSVTDFIVKAADAISAARPGARRESLEAHVRRMDTIEEIATSFPGVVRAFALQAGREMQILVDPGAVDDHQASRLARQIALAIGEQVTVPGRTRVTVIRSFQAIETVGDA.

Residues 1 to 21 (MLIALIAVSVLAVAAIIGSLA) traverse the membrane as a helical segment. The segment at 52–92 (SRASQDLADSRKDVAKARAELESSRTRASDEARRADNADQA) is disordered. Basic and acidic residues predominate over residues 59 to 92 (ADSRKDVAKARAELESSRTRASDEARRADNADQA). Positions 229–289 (VVSVVPLPSN…MRREVARQAL (61 aa)) constitute a KH domain. An HD domain is found at 355 to 449 (VLDHCVECAR…VKAADAISAA (95 aa)).

It belongs to the RNase Y family.

It is found in the cell membrane. Endoribonuclease that initiates mRNA decay. The polypeptide is Ribonuclease Y (Cutibacterium acnes (strain DSM 16379 / KPA171202) (Propionibacterium acnes)).